An 843-amino-acid chain; its full sequence is MTEQNGQENESNKTLALNLSGRPDVAGALKAGVRVIPVEIEDQMKEAYLDYAMSVIVGRALPDVRDGLKPVHRRVLHAMNERAWRSDRPYVKSAKIVGEVIGNYHPHGDSAVYETMVRMAQTFSMRETLIDGQGNFGSVDGDNAAAYRYTEARLTKLAEELLKDIEKNTVSFSPNFDDTRQQPDVLPANFPNILVNGSTGIAVGMATNIPPHNLKEAVNAVIALIQNPDITLPELMKILPGPDFPTGGTIIGGEGLYQAYATGKGSIRIRSKVDIIENNKGREIIVIHEIPYQVNKKNMLEKIGDLVNEKIIEGISEILDLSDRKGIRVEIHVKKDANAQVILNQLFKLTQLQVSYGITMLAILDNRPKIFSLKEILKSYAEHRREVVVKRTEFDLDKAQKRAHILEGLRIALENIDEVIRIIRASKDVREAQSSLMATFSLSELQADAILEMRLQRLTSLEVQKIIDELEQVRILIADLEDILSKPDRVKSIICDELGKVSQSFGNTRTTEISLESLESSTFNAEDLIADEEVVVQLSEDMFIKRLPMDTFRRQKRGGKGVQGISTKREDFVKKLSSAMTHDNLMLFSNKGRAFLLKVYELPIATKEARGKSLKAVINLNDDEIITSLFTFRNFDESYLLMVTREGFVKKIQLDEFTNTKKSGIIAIGLRDGDELIDVIANPNNYDVFIGSKNGLAIRMNLNELRSQGRTASGVTAMKLEDDDSIAGITKVEPNTNLFCISENGFGKRTDFEEFSTKGRGGKGMTYLKIGEKNGRAVGISSVKEEDELLVITQSGMAIRVEVKTISMVGRSAMGVKVVNTKDEDFVKDFAVVRESDSDSAES.

One can recognise a Topo IIA-type catalytic domain in the interval 61 to 528; sequence LPDVRDGLKP…ESSTFNAEDL (468 aa). The active-site O-(5'-phospho-DNA)-tyrosine intermediate is Tyr-149. The GyrA-box motif lies at 555–561; that stretch reads QKRGGKG.

It belongs to the type II topoisomerase GyrA/ParC subunit family. In terms of assembly, heterotetramer, composed of two GyrA and two GyrB chains. In the heterotetramer, GyrA contains the active site tyrosine that forms a transient covalent intermediate with DNA, while GyrB binds cofactors and catalyzes ATP hydrolysis.

It localises to the cytoplasm. It catalyses the reaction ATP-dependent breakage, passage and rejoining of double-stranded DNA.. Functionally, a type II topoisomerase that negatively supercoils closed circular double-stranded (ds) DNA in an ATP-dependent manner to modulate DNA topology and maintain chromosomes in an underwound state. Negative supercoiling favors strand separation, and DNA replication, transcription, recombination and repair, all of which involve strand separation. Also able to catalyze the interconversion of other topological isomers of dsDNA rings, including catenanes and knotted rings. Type II topoisomerases break and join 2 DNA strands simultaneously in an ATP-dependent manner. This is DNA gyrase subunit A from Leptospira biflexa serovar Patoc (strain Patoc 1 / Ames).